The primary structure comprises 156 residues: MNLNATLIGQLIAFAIFVWFCMKYVWPPIIKAIEERQRSIANALASAEAAKKEQSDTKVLVEQEINQARIKAQEIVDLANKRRNEILEEVKIEAEALREKIIEQGHAEIESERKRVQEELRIKVASLAIAGAEKIVGRNIDEAANNDIIDKLVADL.

A helical membrane pass occupies residues 7–27 (LIGQLIAFAIFVWFCMKYVWP).

It belongs to the ATPase B chain family. F-type ATPases have 2 components, F(1) - the catalytic core - and F(0) - the membrane proton channel. F(1) has five subunits: alpha(3), beta(3), gamma(1), delta(1), epsilon(1). F(0) has three main subunits: a(1), b(2) and c(10-14). The alpha and beta chains form an alternating ring which encloses part of the gamma chain. F(1) is attached to F(0) by a central stalk formed by the gamma and epsilon chains, while a peripheral stalk is formed by the delta and b chains.

It is found in the cell inner membrane. In terms of biological role, f(1)F(0) ATP synthase produces ATP from ADP in the presence of a proton or sodium gradient. F-type ATPases consist of two structural domains, F(1) containing the extramembraneous catalytic core and F(0) containing the membrane proton channel, linked together by a central stalk and a peripheral stalk. During catalysis, ATP synthesis in the catalytic domain of F(1) is coupled via a rotary mechanism of the central stalk subunits to proton translocation. Its function is as follows. Component of the F(0) channel, it forms part of the peripheral stalk, linking F(1) to F(0). This is ATP synthase subunit b from Histophilus somni (strain 129Pt) (Haemophilus somnus).